A 374-amino-acid polypeptide reads, in one-letter code: uncharacterized protein (374 aa).

This sequence belongs to the mimivirus L41 family.

This is an uncharacterized protein from Acanthamoeba polyphaga (Amoeba).